We begin with the raw amino-acid sequence, 929 residues long: Chaperone protein ClpC1, chloroplastic (929 aa).

The transit peptide at 1–38 (MAMATRVLAQSTPPSLACYQRNVPSRGSGRSRRSVKMM) directs the protein to the chloroplast. In terms of domain architecture, Clp R spans 95–237 (FERFTEKAIK…RTQVIRMVGE (143 aa)). 2 repeat regions span residues 98–163 (FTEK…IGRG) and 173–237 (FTPR…MVGE). The tract at residues 257 to 504 (LEEYGTNLTK…RVRLRHAQVP (248 aa)) is i. 302–309 (GEPGVGKT) provides a ligand contact to ATP. The UVR domain occupies 511–546 (EKELRQITKEKNEAVRGQDFEKAGTLRDREIELRAE). The tract at residues 552-571 (AKGKEMSKAESETGEEGPMV) is disordered. A compositionally biased stretch (basic and acidic residues) spans 553–562 (KGKEMSKAES). Residues 571-762 (VTESDIQHIV…LLIMTSNVGS (192 aa)) form an II region. Position 645–652 (645–652 (GPTGVGKS)) interacts with ATP. The segment covering 908 to 919 (LNGGSGTPTTSL) has biased composition (polar residues). Positions 908–929 (LNGGSGTPTTSLEEQEDSLPVA) are disordered. Positions 920 to 929 (EEQEDSLPVA) are enriched in acidic residues.

The protein belongs to the ClpA/ClpB family. ClpC subfamily. As to quaternary structure, homodimer. May form hexamer and interact with Clp core. Interacts (via N-terminus) with CLPS1. Interacts with CLPF. Highly expressed in rosette leaves. Expressed in roots, stems and inflorescences. Expressed in photosynthetic green tissues with high levels in young, developing leaf tissues.

It is found in the plastid. The protein localises to the chloroplast stroma. It localises to the chloroplast membrane. Functionally, molecular chaperone that hydrolyzes ATP and is associated with the chloroplast protein import apparatus. May function as the motor for chloroplast protein translocation, as translocation requires ATP hydrolysis in the stroma. May interact with a ClpP-like protease involved in degradation of denatured proteins in the chloroplast. Involved in the regulation of chlorophyll b biosynthesis through the destabilization of chlorophyllide a oxygenase (CAO) protein in response to the accumulation of chlorophyll b. Involved in leaf iron homeostasis. The protein is Chaperone protein ClpC1, chloroplastic of Arabidopsis thaliana (Mouse-ear cress).